Reading from the N-terminus, the 369-residue chain is Probable dual-specificity RNA methyltransferase RlmN (369 aa).

E98 functions as the Proton acceptor in the catalytic mechanism. Residues 106-341 form the Radical SAM core domain; it reads STSRNTLCIS…VTVRKSRGAD (236 aa). A disulfide bond links C113 and C346. Residues C120, C124, and C127 each coordinate [4Fe-4S] cluster. S-adenosyl-L-methionine contacts are provided by residues 171–172, S204, 227–229, and N303; these read GE and SLH. The active-site S-methylcysteine intermediate is C346.

It belongs to the radical SAM superfamily. RlmN family. [4Fe-4S] cluster is required as a cofactor.

The protein resides in the cytoplasm. The catalysed reaction is adenosine(2503) in 23S rRNA + 2 reduced [2Fe-2S]-[ferredoxin] + 2 S-adenosyl-L-methionine = 2-methyladenosine(2503) in 23S rRNA + 5'-deoxyadenosine + L-methionine + 2 oxidized [2Fe-2S]-[ferredoxin] + S-adenosyl-L-homocysteine. It catalyses the reaction adenosine(37) in tRNA + 2 reduced [2Fe-2S]-[ferredoxin] + 2 S-adenosyl-L-methionine = 2-methyladenosine(37) in tRNA + 5'-deoxyadenosine + L-methionine + 2 oxidized [2Fe-2S]-[ferredoxin] + S-adenosyl-L-homocysteine. In terms of biological role, specifically methylates position 2 of adenine 2503 in 23S rRNA and position 2 of adenine 37 in tRNAs. The polypeptide is Probable dual-specificity RNA methyltransferase RlmN (Chloroherpeton thalassium (strain ATCC 35110 / GB-78)).